Consider the following 160-residue polypeptide: Protein max (160 aa).

Residues 1-13 show a composition bias toward acidic residues; it reads MSDNDDIEVESDE. The tract at residues 1–40 is disordered; sequence MSDNDDIEVESDEEQPRFQSAADKRAHHNALERKRRDHIK. N-acetylserine is present on serine 2. Phosphoserine is present on residues serine 2 and serine 11. The bHLH domain maps to 23 to 74; it reads DKRAHHNALERKRRDHIKDSFHSLRDSVPSLQGEKASRAQILDKATEYIQYM. Over residues 29–40 the composition is skewed to basic and acidic residues; that stretch reads NALERKRRDHIK. Lysine 66 is subject to N6-acetyllysine. The interval 81 to 102 is leucine-zipper; it reads HQQDIDDLKRQNALLEQQVRAL. A disordered region spans residues 105 to 160; the sequence is ARSSAQLQTNYPSSDNSLYTNAKGGTISAFDGGSDSSSESEPEEPQNRKKLRMEAS. Serine 107 carries the phosphoserine modification. Polar residues predominate over residues 107–124; that stretch reads SSAQLQTNYPSSDNSLYT. An N6-acetyllysine mark is found at lysine 153 and lysine 154.

The protein belongs to the MAX family. As to quaternary structure, efficient DNA binding requires dimerization with another bHLH protein. Binds DNA as a heterodimer with MYC or MAD. Part of the E2F6.com-1 complex in G0 phase composed of E2F6, MGA, MAX, TFDP1, CBX3, BAT8, EUHMTASE1, RING1, RNF2, MBLR, L3MBTL2 and YAF2. Component of some MLL1/MLL complex, at least composed of the core components KMT2A/MLL1, ASH2L, HCFC1/HCF1, WDR5 and RBBP5, as well as the facultative components BACC1, CHD8, E2F6, HSP70, INO80C, KANSL1, LAS1L, MAX, MCRS1, MGA, MYST1/MOF, PELP1, PHF20, PRP31, RING2, RUVB1/TIP49A, RUVB2/TIP49B, SENP3, TAF1, TAF4, TAF6, TAF7, TAF9 and TEX10. Interacts with SPAG9. The heterodimer MYC:MAX interacts with ABI1; the interaction may enhance MYC:MAX transcriptional activity. Post-translationally, phosphorylated.

The protein resides in the nucleus. The protein localises to the cell projection. It is found in the dendrite. Its function is as follows. Transcription regulator. Forms a sequence-specific DNA-binding protein complex with MYC or MAD which recognizes the core sequence 5'-CAC[GA]TG-3'. The MYC:MAX complex is a transcriptional activator, whereas the MAD:MAX complex is a repressor. May repress transcription via the recruitment of a chromatin remodeling complex containing H3 'Lys-9' histone methyltransferase activity. Represses MYC transcriptional activity from E-box elements. The protein is Protein max of Rattus norvegicus (Rat).